The following is a 408-amino-acid chain: Aminomethyltransferase, mitochondrial (408 aa).

The transit peptide at 1–30 directs the protein to the mitochondrion; the sequence is MRGGGLWQLGQSVTRRLAQAEKKVIARRCF. Substrate is bound by residues E235, R266, and Y404.

It belongs to the GcvT family. The glycine cleavage system is composed of four proteins: P, T, L and H.

Its subcellular location is the mitochondrion. The catalysed reaction is N(6)-[(R)-S(8)-aminomethyldihydrolipoyl]-L-lysyl-[protein] + (6S)-5,6,7,8-tetrahydrofolate = N(6)-[(R)-dihydrolipoyl]-L-lysyl-[protein] + (6R)-5,10-methylene-5,6,7,8-tetrahydrofolate + NH4(+). In terms of biological role, the glycine cleavage system catalyzes the degradation of glycine. The polypeptide is Aminomethyltransferase, mitochondrial (GDCST) (Mesembryanthemum crystallinum (Common ice plant)).